The following is a 325-amino-acid chain: tRNA(Ile)-lysidine synthase (325 aa).

34–39 (SGGADS) provides a ligand contact to ATP.

The protein belongs to the tRNA(Ile)-lysidine synthase family.

The protein resides in the cytoplasm. The enzyme catalyses cytidine(34) in tRNA(Ile2) + L-lysine + ATP = lysidine(34) in tRNA(Ile2) + AMP + diphosphate + H(+). Ligates lysine onto the cytidine present at position 34 of the AUA codon-specific tRNA(Ile) that contains the anticodon CAU, in an ATP-dependent manner. Cytidine is converted to lysidine, thus changing the amino acid specificity of the tRNA from methionine to isoleucine. The chain is tRNA(Ile)-lysidine synthase from Rhodococcus jostii (strain RHA1).